Consider the following 202-residue polypeptide: uncharacterized protein (202 aa).

This is an uncharacterized protein from Methanocaldococcus jannaschii (strain ATCC 43067 / DSM 2661 / JAL-1 / JCM 10045 / NBRC 100440) (Methanococcus jannaschii).